The sequence spans 890 residues: MTDVTIKTLAAERQTSVERLVQQFADAGIRKSADDSVSAQEKQTLIDHLNQKNSGPDKLTLQRKTRSTLNIPSTGGKSKSVQIEVRKKRTFVKRDPQEAERLAAEEQAQREAEEQARREAEESAKREAQQKAEREAAEQAKREAAEQAKREAAEKDKVSNQQDDMTKNAQAEKARREQEAAELKRKAEEEARRKLEEEARRVAEEARRMAEENKWTDNAEPTEDSSDYHVTTSQHARQAEDESDREVEGGRGRGRNAKAARPKKGNKHAESKADREEARAAVRGGKGGKRKGSSLQQGFQKPAQAVNRDVVIGETITVGELANKMAVKGSQVIKAMMKLGAMATINQVIDQETAQLVAEEMGHKVILRRENELEEAVMSDRDTGAAAEPRAPVVTIMGHVDHGKTSLLDYIRSTKVASGEAGGITQHIGAYHVETENGMITFLDTPGHAAFTSMRARGAQATDIVVLVVAADDGVMPQTIEAIQHAKAAQVPVVVAVNKIDKPEADPDRVKNELSQYGILPEEWGGESQFVHVSAKAGTGIDELLDAILLQAEVLELKAVRKGMASGAVIESFLDKGRGPVATVLVREGTLHKGDIVLCGFEYGRVRAMRNELGQEVLEAGPSIPVEILGLSGVPAAGDEVTVVRDEKKAREVALYRQGKFREVKLARQQKSKLENMFANMTEGEVHEVNIVLKADVQGSVEAISDSLLKLSTDEVKVKIIGSGVGGITETDATLAAASNAILVGFNVRADASARKVIEAESLDLRYYSVIYNLIDEVKAAMSGMLSPELKQQIIGLAEVRDVFKSPKFGAIAGCMVTEGVVKRHNPIRVLRDNVVIYEGELESLRRFKDDVNEVRNGMECGIGVKNYNDVRTGDVIEVFEIIEIQRTIA.

The tract at residues 45 to 302 (LIDHLNQKNS…SSLQQGFQKP (258 aa)) is disordered. The span at 67–81 (STLNIPSTGGKSKSV) shows a compositional bias: polar residues. A compositionally biased stretch (basic and acidic residues) spans 92-217 (VKRDPQEAER…RMAEENKWTD (126 aa)). The span at 252–266 (GRGRNAKAARPKKGN) shows a compositional bias: basic residues. Positions 267 to 280 (KHAESKADREEARA) are enriched in basic and acidic residues. Positions 389-558 (PRAPVVTIMG…LLQAEVLELK (170 aa)) constitute a tr-type G domain. The interval 398–405 (GHVDHGKT) is G1. 398 to 405 (GHVDHGKT) contributes to the GTP binding site. A G2 region spans residues 423-427 (GITQH). Positions 444–447 (DTPG) are G3. GTP contacts are provided by residues 444–448 (DTPGH) and 498–501 (NKID). A G4 region spans residues 498–501 (NKID). Residues 534-536 (SAK) form a G5 region. N6-acetyllysine is present on Lys-808.

Belongs to the TRAFAC class translation factor GTPase superfamily. Classic translation factor GTPase family. IF-2 subfamily.

The protein localises to the cytoplasm. In terms of biological role, one of the essential components for the initiation of protein synthesis. Protects formylmethionyl-tRNA from spontaneous hydrolysis and promotes its binding to the 30S ribosomal subunits. Also involved in the hydrolysis of GTP during the formation of the 70S ribosomal complex. The protein is Translation initiation factor IF-2 of Shigella dysenteriae serotype 1 (strain Sd197).